Here is a 242-residue protein sequence, read N- to C-terminus: MMNFADTLVILNDDAPCELLRKKYAEMLVPTVSVSSFKRNKIYKTYNNVFLYTYREFDFLWDLDDNILHKVQRCLNKSGVLKLVLYISNTAGGDSQRHDEIAKRLKKECLYSGFINISNETNMAENGIIINVTAENPDFLSNEDDNDEHSSDGEAHENAEDNKKVVNRVCANCTCGKKANGVKLDTVAINEKEVQYLTENAVSSCGNCYLGDAFRCASCPYKGLPAFQPGENVKLNLDNEPN.

The tract at residues 1-140 is N-terminal SAM-like domain; sequence MMNFADTLVI…NVTAENPDFL (140 aa). The tract at residues 140–159 is disordered; it reads LSNEDDNDEHSSDGEAHENA. A linker region spans residues 141-162; it reads SNEDDNDEHSSDGEAHENAEDN. The segment covering 148-159 has biased composition (basic and acidic residues); sequence EHSSDGEAHENA. [4Fe-4S] cluster is bound by residues C205, C208, C216, and C219. Short sequence motifs (cx2C motif) lie at residues 205 to 208 and 216 to 219; these read CGNC and CASC. Residues 205–219 form a fe-S binding site B region; it reads CGNCYLGDAFRCASC.

It belongs to the anamorsin family. Monomer. It depends on [4Fe-4S] cluster as a cofactor.

The protein localises to the cytoplasm. Its subcellular location is the mitochondrion intermembrane space. In terms of biological role, component of the cytosolic iron-sulfur (Fe-S) protein assembly (CIA) machinery. Required for the maturation of extramitochondrial Fe-S proteins. Part of an electron transfer chain functioning in an early step of cytosolic Fe-S biogenesis, facilitating the de novo assembly of a [4Fe-4S] cluster on the cytosolic Fe-S scaffold complex. Electrons are transferred from NADPH via a FAD- and FMN-containing diflavin oxidoreductase. Together with the diflavin oxidoreductase, also required for the assembly of the diferric tyrosyl radical cofactor of ribonucleotide reductase (RNR), probably by providing electrons for reduction during radical cofactor maturation in the catalytic small subunit. The polypeptide is Anamorsin homolog (Plasmodium vivax (strain Salvador I)).